The chain runs to 201 residues: UPF0301 protein ROP_34500 (201 aa).

It belongs to the UPF0301 (AlgH) family.

This chain is UPF0301 protein ROP_34500, found in Rhodococcus opacus (strain B4).